The following is a 506-amino-acid chain: Anaerobic nitric oxide reductase transcription regulator NorR (506 aa).

Asp57 bears the 4-aspartylphosphate mark. Residues 187–416 enclose the Sigma-54 factor interaction domain; that stretch reads MIGLSPAMTQ…LEHAIHRAVV (230 aa). ATP is bound by residues 215–222 and 278–287; these read GETGTGKE and ADNGTLFLDE. Residues 481 to 500 constitute a DNA-binding region (H-T-H motif); sequence WAASARALETDVANLHRLAK.

Its pathway is nitrogen metabolism; nitric oxide reduction. In terms of biological role, required for the expression of anaerobic nitric oxide (NO) reductase, acts as a transcriptional activator for at least the norVW operon. Activation also requires sigma-54. This is Anaerobic nitric oxide reductase transcription regulator NorR from Salmonella heidelberg (strain SL476).